Reading from the N-terminus, the 567-residue chain is Urease subunit alpha (567 aa).

Residues 129–567 (GGIDSHIHFI…LPLAQRYFLF (439 aa)) enclose the Urease domain. Residues histidine 134, histidine 136, and lysine 217 each contribute to the Ni(2+) site. Lysine 217 bears the N6-carboxylysine mark. Residue histidine 219 participates in substrate binding. Positions 246 and 272 each coordinate Ni(2+). The active-site Proton donor is the histidine 320. Residue aspartate 360 coordinates Ni(2+).

It belongs to the metallo-dependent hydrolases superfamily. Urease alpha subunit family. As to quaternary structure, heterotrimer of UreA (gamma), UreB (beta) and UreC (alpha) subunits. Three heterotrimers associate to form the active enzyme. Ni cation is required as a cofactor. In terms of processing, carboxylation allows a single lysine to coordinate two nickel ions.

It is found in the cytoplasm. It catalyses the reaction urea + 2 H2O + H(+) = hydrogencarbonate + 2 NH4(+). It participates in nitrogen metabolism; urea degradation; CO(2) and NH(3) from urea (urease route): step 1/1. The sequence is that of Urease subunit alpha from Pseudomonas putida (strain W619).